We begin with the raw amino-acid sequence, 249 residues long: Metallo-beta-lactamase type 2 (249 aa).

The first 22 residues, 1–22, serve as a signal peptide directing secretion; the sequence is MMKKMKWALVLALGLTGLNAFG. Zn(2+) contacts are provided by His-98, His-100, Asp-102, His-161, and Cys-180. Lys-183 is a substrate binding site. Position 222 (His-222) interacts with Zn(2+).

The protein belongs to the metallo-beta-lactamase superfamily. Class-B beta-lactamase family. As to quaternary structure, monomer. Requires Zn(2+) as cofactor.

The protein resides in the periplasm. The enzyme catalyses a beta-lactam + H2O = a substituted beta-amino acid. Functionally, confers resistance to the different beta-lactams antibiotics (penicillin, cephalosporin and carbapenem) via the hydrolysis of the beta-lactam ring. This chain is Metallo-beta-lactamase type 2 (blaB4), found in Elizabethkingia meningoseptica (Chryseobacterium meningosepticum).